The chain runs to 325 residues: VSG expression site-associated protein 117A (325 aa).

A signal peptide spans 1–23; it reads MKVTIVELVVWLFSVNFFVVVAE. N-linked (GlcNAc...) asparagine glycosylation is found at Asn-72, Asn-290, and Asn-313.

Functionally, not known but may be related to activation of the variant surface glycoprotein genes. The chain is VSG expression site-associated protein 117A from Trypanosoma brucei brucei.